A 154-amino-acid chain; its full sequence is Ribonuclease P protein component (154 aa).

This sequence belongs to the RnpA family. Consists of a catalytic RNA component (M1 or rnpB) and a protein subunit.

It catalyses the reaction Endonucleolytic cleavage of RNA, removing 5'-extranucleotides from tRNA precursor.. Functionally, RNaseP catalyzes the removal of the 5'-leader sequence from pre-tRNA to produce the mature 5'-terminus. It can also cleave other RNA substrates such as 4.5S RNA. The protein component plays an auxiliary but essential role in vivo by binding to the 5'-leader sequence and broadening the substrate specificity of the ribozyme. The chain is Ribonuclease P protein component from Chlorobaculum tepidum (strain ATCC 49652 / DSM 12025 / NBRC 103806 / TLS) (Chlorobium tepidum).